Consider the following 214-residue polypeptide: Pyridoxine/pyridoxamine 5'-phosphate oxidase (214 aa).

Substrate contacts are provided by residues 11–14 (RREY) and K68. Residues 63–68 (RLVLLK), 78–79 (FT), R84, K85, and Q107 contribute to the FMN site. Residues Y125 and R129 each contribute to the substrate site. Residues 142–143 (QS) and W187 each bind FMN. 193-195 (RLH) serves as a coordination point for substrate. R197 is an FMN binding site.

This sequence belongs to the pyridoxamine 5'-phosphate oxidase family. In terms of assembly, homodimer. Requires FMN as cofactor.

It carries out the reaction pyridoxamine 5'-phosphate + O2 + H2O = pyridoxal 5'-phosphate + H2O2 + NH4(+). The catalysed reaction is pyridoxine 5'-phosphate + O2 = pyridoxal 5'-phosphate + H2O2. It functions in the pathway cofactor metabolism; pyridoxal 5'-phosphate salvage; pyridoxal 5'-phosphate from pyridoxamine 5'-phosphate: step 1/1. Its pathway is cofactor metabolism; pyridoxal 5'-phosphate salvage; pyridoxal 5'-phosphate from pyridoxine 5'-phosphate: step 1/1. Catalyzes the oxidation of either pyridoxine 5'-phosphate (PNP) or pyridoxamine 5'-phosphate (PMP) into pyridoxal 5'-phosphate (PLP). The sequence is that of Pyridoxine/pyridoxamine 5'-phosphate oxidase from Blochmanniella floridana.